Here is a 166-residue protein sequence, read N- to C-terminus: Protein-export protein SecB (166 aa).

It belongs to the SecB family. In terms of assembly, homotetramer, a dimer of dimers. One homotetramer interacts with 1 SecA dimer.

The protein localises to the cytoplasm. In terms of biological role, one of the proteins required for the normal export of preproteins out of the cell cytoplasm. It is a molecular chaperone that binds to a subset of precursor proteins, maintaining them in a translocation-competent state. It also specifically binds to its receptor SecA. This chain is Protein-export protein SecB, found in Acidiphilium cryptum (strain JF-5).